A 267-amino-acid chain; its full sequence is Glutamate racemase (267 aa).

Substrate is bound by residues 10 to 11 (DS) and 42 to 43 (YG). Cys73 functions as the Proton donor/acceptor in the catalytic mechanism. 74 to 75 (NT) is a binding site for substrate. The active-site Proton donor/acceptor is the Cys183. Position 184-185 (184-185 (TH)) interacts with substrate.

Belongs to the aspartate/glutamate racemases family.

The enzyme catalyses L-glutamate = D-glutamate. It functions in the pathway cell wall biogenesis; peptidoglycan biosynthesis. Functionally, provides the (R)-glutamate required for cell wall biosynthesis. In Lactobacillus acidophilus (strain ATCC 700396 / NCK56 / N2 / NCFM), this protein is Glutamate racemase.